A 149-amino-acid polypeptide reads, in one-letter code: MKVEVCSFSGSKVYPGAGRLFVRGDNKVFRFVNKKSESLFLQRKNPRRLSWTVLYRRMHKKGISEEHAKKRTRRTVKHQRGIVGANLDVIKEKRNQRPEVRAAARAAALKQRKDKKAASESEKKAIKAKSAASSARGQAIKNAKAAARH.

2 stretches are compositionally biased toward basic and acidic residues: residues 93-102 and 116-125; these read KRNQRPEVRA and KAASESEKKA. The segment at 93 to 149 is disordered; the sequence is KRNQRPEVRAAARAAALKQRKDKKAASESEKKAIKAKSAASSARGQAIKNAKAAARH.

It belongs to the eukaryotic ribosomal protein eL24 family. In terms of assembly, component of the large ribosomal subunit (LSU). Mature yeast ribosomes consist of a small (40S) and a large (60S) subunit. The 40S small subunit contains 1 molecule of ribosomal RNA (18S rRNA) and at least 33 different proteins. The large 60S subunit contains 3 rRNA molecules (25S, 5.8S and 5S rRNA) and at least 46 different proteins.

The protein localises to the cytoplasm. Functionally, component of the ribosome, a large ribonucleoprotein complex responsible for the synthesis of proteins in the cell. The small ribosomal subunit (SSU) binds messenger RNAs (mRNAs) and translates the encoded message by selecting cognate aminoacyl-transfer RNA (tRNA) molecules. The large subunit (LSU) contains the ribosomal catalytic site termed the peptidyl transferase center (PTC), which catalyzes the formation of peptide bonds, thereby polymerizing the amino acids delivered by tRNAs into a polypeptide chain. The nascent polypeptides leave the ribosome through a tunnel in the LSU and interact with protein factors that function in enzymatic processing, targeting, and the membrane insertion of nascent chains at the exit of the ribosomal tunnel. In Schizosaccharomyces pombe (strain 972 / ATCC 24843) (Fission yeast), this protein is Large ribosomal subunit protein eL24A (rpl2401).